We begin with the raw amino-acid sequence, 215 residues long: Pyrrolidone-carboxylate peptidase (215 aa).

Catalysis depends on residues Glu80, Cys143, and His167.

This sequence belongs to the peptidase C15 family. Homotetramer.

The protein resides in the cytoplasm. It catalyses the reaction Release of an N-terminal pyroglutamyl group from a polypeptide, the second amino acid generally not being Pro.. Functionally, removes 5-oxoproline from various penultimate amino acid residues except L-proline. This is Pyrrolidone-carboxylate peptidase from Pectobacterium atrosepticum (strain SCRI 1043 / ATCC BAA-672) (Erwinia carotovora subsp. atroseptica).